A 155-amino-acid chain; its full sequence is MLKQVEIFTDGSCLGNPGPGGYGAILRYRGHEKTFSAGYTRTTNNRMELMAAIVALEALKEHCEVILSTDSQYVRQGITQWIHNWKKRGWKTADKKPVKNVDLWQRLDAALGQHQIKWEWVKGHAGHPENERCDELARAAAMNPTLEDTGYQVEV.

One can recognise an RNase H type-1 domain in the interval 1–142 (MLKQVEIFTD…CDELARAAAM (142 aa)). Positions 10, 48, 70, and 134 each coordinate Mg(2+).

This sequence belongs to the RNase H family. Monomer. Mg(2+) serves as cofactor.

The protein resides in the cytoplasm. The catalysed reaction is Endonucleolytic cleavage to 5'-phosphomonoester.. In terms of biological role, endonuclease that specifically degrades the RNA of RNA-DNA hybrids. The polypeptide is Ribonuclease H (Escherichia coli O127:H6 (strain E2348/69 / EPEC)).